The primary structure comprises 70 residues: Large ribosomal subunit protein uL29 (70 aa).

The protein belongs to the universal ribosomal protein uL29 family.

The polypeptide is Large ribosomal subunit protein uL29 (Clostridium novyi (strain NT)).